Consider the following 343-residue polypeptide: MKNLTPRQAQILKAIINEYIAYAIPVGSKLLTKKYFKNLSGGTLRNEMAALEKKGFLKKNHISSGRVPSQIGYQYYVKVLNVSNTTNDLKTRLRSVILQQHKTIDEVIELGVKFINEIINLPVVLTNFSSDEVLKKIDLIILDKSFALFLLVSASGKVFKKTISYANQRQFEDIVICVRIFNDRIIDTRFSEINNQLEVLKEIIRTKVHEYQYVIDEILFKLFDLDQIEANKKIYGIQYLAKQPEFANQEKLTKILNLLEDTSVWQQMAFINQTNQKTNIVFGDQLGFKEISVASTLINTTSEAKHQLAIVGPTRMDYQKIKALLTTLKEEIEKYDKKIHNQT.

The protein belongs to the HrcA family.

Negative regulator of class I heat shock genes (grpE-dnaK-dnaJ and groELS operons). Prevents heat-shock induction of these operons. This chain is Heat-inducible transcription repressor HrcA, found in Mycoplasma genitalium (strain ATCC 33530 / DSM 19775 / NCTC 10195 / G37) (Mycoplasmoides genitalium).